A 509-amino-acid chain; its full sequence is GMP synthase [glutamine-hydrolyzing] (509 aa).

The Glutamine amidotransferase type-1 domain maps to 4 to 194 (LVLVVDFGGQ…LYNICGLENS (191 aa)). The Nucleophile role is filled by Cys-81. Active-site residues include His-168 and Glu-170. Positions 195–384 (WSMASFAEEK…LGIPHHLVWR (190 aa)) constitute a GMPS ATP-PPase domain. 222–228 (SGGVDSS) lines the ATP pocket.

Homodimer.

The enzyme catalyses XMP + L-glutamine + ATP + H2O = GMP + L-glutamate + AMP + diphosphate + 2 H(+). The protein operates within purine metabolism; GMP biosynthesis; GMP from XMP (L-Gln route): step 1/1. Catalyzes the synthesis of GMP from XMP. The chain is GMP synthase [glutamine-hydrolyzing] from Clostridium perfringens (strain 13 / Type A).